We begin with the raw amino-acid sequence, 262 residues long: Pyridoxine 5'-phosphate synthase (262 aa).

A 3-amino-2-oxopropyl phosphate-binding site is contributed by Asn6. 8 to 9 is a binding site for 1-deoxy-D-xylulose 5-phosphate; the sequence is DH. Arg17 contributes to the 3-amino-2-oxopropyl phosphate binding site. His43 functions as the Proton acceptor in the catalytic mechanism. 1-deoxy-D-xylulose 5-phosphate is bound by residues Arg45 and His50. The Proton acceptor role is filled by Glu70. Thr102 is a binding site for 1-deoxy-D-xylulose 5-phosphate. His215 functions as the Proton donor in the catalytic mechanism. 3-amino-2-oxopropyl phosphate is bound by residues Gly216 and 237-238; that span reads GH.

This sequence belongs to the PNP synthase family. In terms of assembly, homooctamer; tetramer of dimers.

Its subcellular location is the cytoplasm. The enzyme catalyses 3-amino-2-oxopropyl phosphate + 1-deoxy-D-xylulose 5-phosphate = pyridoxine 5'-phosphate + phosphate + 2 H2O + H(+). It functions in the pathway cofactor biosynthesis; pyridoxine 5'-phosphate biosynthesis; pyridoxine 5'-phosphate from D-erythrose 4-phosphate: step 5/5. Catalyzes the complicated ring closure reaction between the two acyclic compounds 1-deoxy-D-xylulose-5-phosphate (DXP) and 3-amino-2-oxopropyl phosphate (1-amino-acetone-3-phosphate or AAP) to form pyridoxine 5'-phosphate (PNP) and inorganic phosphate. The polypeptide is Pyridoxine 5'-phosphate synthase (Helicobacter acinonychis (strain Sheeba)).